We begin with the raw amino-acid sequence, 90 residues long: Envelope protein US9 homolog (90 aa).

At 1–63 (MEPLRLADAE…IRRRRRQTRA (63 aa)) the chain is on the intravirion side. Positions 12 to 13 (LL) match the Di-leucine internalization motif motif. The acidic stretch occupies residues 29–38 (EAYYTESDDE). A helical; Signal-anchor for type II membrane protein membrane pass occupies residues 64–84 (AGFVAAFVLVALISGGLGALM). The Virion surface segment spans residues 85–90 (CWLAYR).

The protein belongs to the alphaherpesvirinae envelope protein US9 family. In terms of processing, phosphorylated on serines within the acidic cluster. Phosphorylation determines whether endocytosed viral US9 traffics to the trans-Golgi network or recycles to the cell membrane.

It localises to the virion membrane. It is found in the host Golgi apparatus membrane. The protein localises to the host smooth endoplasmic reticulum membrane. The protein resides in the host cell membrane. Its function is as follows. Essential for the anterograde spread of the infection throughout the host nervous system. Together with the gE/gI heterodimer, US9 is involved in the sorting and transport of viral structural components toward axon tips. The protein is Envelope protein US9 homolog of Cercopithecine herpesvirus 1 (CeHV-1).